Here is a 45-residue protein sequence, read N- to C-terminus: Large ribosomal subunit protein bL34 (45 aa).

Belongs to the bacterial ribosomal protein bL34 family.

The sequence is that of Large ribosomal subunit protein bL34 from Salinispora arenicola (strain CNS-205).